Consider the following 360-residue polypeptide: Probable dual-specificity RNA methyltransferase RlmN (360 aa).

Glu-103 acts as the Proton acceptor in catalysis. The 234-residue stretch at 109-342 folds into the Radical SAM core domain; the sequence is HEYGNSVCVT…VTIRREQGHD (234 aa). Cys-116 and Cys-347 are oxidised to a cystine. [4Fe-4S] cluster-binding residues include Cys-123, Cys-127, and Cys-130. S-adenosyl-L-methionine is bound by residues 173–174, Ser-205, 228–230, and Asn-304; these read GE and SLH. The active-site S-methylcysteine intermediate is the Cys-347.

Belongs to the radical SAM superfamily. RlmN family. [4Fe-4S] cluster serves as cofactor.

Its subcellular location is the cytoplasm. It catalyses the reaction adenosine(2503) in 23S rRNA + 2 reduced [2Fe-2S]-[ferredoxin] + 2 S-adenosyl-L-methionine = 2-methyladenosine(2503) in 23S rRNA + 5'-deoxyadenosine + L-methionine + 2 oxidized [2Fe-2S]-[ferredoxin] + S-adenosyl-L-homocysteine. It carries out the reaction adenosine(37) in tRNA + 2 reduced [2Fe-2S]-[ferredoxin] + 2 S-adenosyl-L-methionine = 2-methyladenosine(37) in tRNA + 5'-deoxyadenosine + L-methionine + 2 oxidized [2Fe-2S]-[ferredoxin] + S-adenosyl-L-homocysteine. Specifically methylates position 2 of adenine 2503 in 23S rRNA and position 2 of adenine 37 in tRNAs. The sequence is that of Probable dual-specificity RNA methyltransferase RlmN from Bacillus pumilus (strain SAFR-032).